Consider the following 268-residue polypeptide: uncharacterized protein (268 aa).

This is an uncharacterized protein from Methanocaldococcus jannaschii (strain ATCC 43067 / DSM 2661 / JAL-1 / JCM 10045 / NBRC 100440) (Methanococcus jannaschii).